We begin with the raw amino-acid sequence, 504 residues long: Maturase K (504 aa).

This sequence belongs to the intron maturase 2 family. MatK subfamily.

It localises to the plastid. It is found in the chloroplast. Functionally, usually encoded in the trnK tRNA gene intron. Probably assists in splicing its own and other chloroplast group II introns. The polypeptide is Maturase K (Chimaphila umbellata (Pipsissewa)).